We begin with the raw amino-acid sequence, 421 residues long: MFEGRPRDSCLVSTLFTMPSHKETKWSFLVSGKRSFLNNDESDLHFKKMYKLTTDSSEGEDNGSSSDSGTLIPGMNRDDSLSCLIRCSRADYCSIASVNRSLRSLIRSGEIYRLRRLQGTLEHWVYFSCHLNEWEAFDPRSKRWMHLPSMPQNECFRYADKESLAVGTDLLVFGWEVSSYVIYRYSLLTNSWSTAKSMNMPRCLFGSASYGEIAVLAGGCDSSGRILDTAELYNYEDQTWLVLPGMNKRRKMCSGVFMDGKFYVIGGIGVGEENEPKVLTCGEEFDLKTRKWTEIPEMSPPRSNQGNGMSAAAMAPPLVAVVNDQLYAADHAGMAVRRYDKEKRVWNKVGNLPEQAGSMNGWGLAFRACGDRIIVIGGPKAPGEGFIELNSWVPSVTTPEWHLLGKKQSVNFVYNCAVMSC.

Positions 54–73 are disordered; sequence TDSSEGEDNGSSSDSGTLIP. Residues 70 to 117 form the F-box domain; sequence TLIPGMNRDDSLSCLIRCSRADYCSIASVNRSLRSLIRSGEIYRLRRL. 5 Kelch repeats span residues 114–167, 169–212, 213–260, 261–312, and 320–366; these read LRRL…LAVG, DLLV…SYGE, IAVL…FMDG, KFYV…MSAA, and AVVN…GLAF.

The sequence is that of F-box/kelch-repeat protein At1g26930 from Arabidopsis thaliana (Mouse-ear cress).